The sequence spans 185 residues: UPF0301 protein Tbd_2579 (185 aa).

The protein belongs to the UPF0301 (AlgH) family.

This is UPF0301 protein Tbd_2579 from Thiobacillus denitrificans (strain ATCC 25259 / T1).